The chain runs to 145 residues: Cuticle protein 7 (145 aa).

The Chitin-binding type R&amp;R domain occupies Pro41–Pro114.

The sequence is that of Cuticle protein 7 from Blaberus craniifer (Death's head cockroach).